The following is a 107-amino-acid chain: UPF0145 protein BVU_2335 (107 aa).

This sequence belongs to the UPF0145 family.

This Phocaeicola vulgatus (strain ATCC 8482 / DSM 1447 / JCM 5826 / CCUG 4940 / NBRC 14291 / NCTC 11154) (Bacteroides vulgatus) protein is UPF0145 protein BVU_2335.